The chain runs to 173 residues: Crossover junction endodeoxyribonuclease RuvC (173 aa).

Catalysis depends on residues D8, E67, and D139. Mg(2+) contacts are provided by D8, E67, and D139.

Belongs to the RuvC family. As to quaternary structure, homodimer which binds Holliday junction (HJ) DNA. The HJ becomes 2-fold symmetrical on binding to RuvC with unstacked arms; it has a different conformation from HJ DNA in complex with RuvA. In the full resolvosome a probable DNA-RuvA(4)-RuvB(12)-RuvC(2) complex forms which resolves the HJ. Mg(2+) serves as cofactor.

Its subcellular location is the cytoplasm. It catalyses the reaction Endonucleolytic cleavage at a junction such as a reciprocal single-stranded crossover between two homologous DNA duplexes (Holliday junction).. Functionally, the RuvA-RuvB-RuvC complex processes Holliday junction (HJ) DNA during genetic recombination and DNA repair. Endonuclease that resolves HJ intermediates. Cleaves cruciform DNA by making single-stranded nicks across the HJ at symmetrical positions within the homologous arms, yielding a 5'-phosphate and a 3'-hydroxyl group; requires a central core of homology in the junction. The consensus cleavage sequence is 5'-(A/T)TT(C/G)-3'. Cleavage occurs on the 3'-side of the TT dinucleotide at the point of strand exchange. HJ branch migration catalyzed by RuvA-RuvB allows RuvC to scan DNA until it finds its consensus sequence, where it cleaves and resolves the cruciform DNA. In Vibrio cholerae serotype O1 (strain ATCC 39541 / Classical Ogawa 395 / O395), this protein is Crossover junction endodeoxyribonuclease RuvC.